Here is a 220-residue protein sequence, read N- to C-terminus: tRNA (guanine-N(7)-)-methyltransferase (220 aa).

The S-adenosyl-L-methionine site is built by glutamate 42, glutamate 67, and aspartate 122. Aspartate 122 is an active-site residue. Substrate contacts are provided by residues lysine 126, aspartate 158, and 198–201; that span reads TEYE.

It belongs to the class I-like SAM-binding methyltransferase superfamily. TrmB family.

The catalysed reaction is guanosine(46) in tRNA + S-adenosyl-L-methionine = N(7)-methylguanosine(46) in tRNA + S-adenosyl-L-homocysteine. It participates in tRNA modification; N(7)-methylguanine-tRNA biosynthesis. Catalyzes the formation of N(7)-methylguanine at position 46 (m7G46) in tRNA. The polypeptide is tRNA (guanine-N(7)-)-methyltransferase (Mycoplasma capricolum subsp. capricolum (strain California kid / ATCC 27343 / NCTC 10154)).